A 201-amino-acid polypeptide reads, in one-letter code: MYDYIKGTVTTITPEYIVVEAGQIGYQIITGNPFSFQRLEGTEAQVFLYQHVREDNISLFGFQTTEERYLFKKLLSVSGIGPKSALAIIASGDVVPLISAIESEDDVYLTKFPSVGKKTARQIILDLKGKLADVVASEIVYVAPENDMVAGLSPQLEEAVLALEALGYSTRELKKVIPKLAKEEDLTSDAYIKLALQLMTK.

Positions 1-63 (MYDYIKGTVT…EDNISLFGFQ (63 aa)) are domain I. The domain II stretch occupies residues 64-142 (TTEERYLFKK…DVVASEIVYV (79 aa)). Residues 143 to 153 (APENDMVAGLS) are flexible linker. A domain III region spans residues 153-201 (SPQLEEAVLALEALGYSTRELKKVIPKLAKEEDLTSDAYIKLALQLMTK).

Belongs to the RuvA family. In terms of assembly, homotetramer. Forms an RuvA(8)-RuvB(12)-Holliday junction (HJ) complex. HJ DNA is sandwiched between 2 RuvA tetramers; dsDNA enters through RuvA and exits via RuvB. An RuvB hexamer assembles on each DNA strand where it exits the tetramer. Each RuvB hexamer is contacted by two RuvA subunits (via domain III) on 2 adjacent RuvB subunits; this complex drives branch migration. In the full resolvosome a probable DNA-RuvA(4)-RuvB(12)-RuvC(2) complex forms which resolves the HJ.

It is found in the cytoplasm. Its function is as follows. The RuvA-RuvB-RuvC complex processes Holliday junction (HJ) DNA during genetic recombination and DNA repair, while the RuvA-RuvB complex plays an important role in the rescue of blocked DNA replication forks via replication fork reversal (RFR). RuvA specifically binds to HJ cruciform DNA, conferring on it an open structure. The RuvB hexamer acts as an ATP-dependent pump, pulling dsDNA into and through the RuvAB complex. HJ branch migration allows RuvC to scan DNA until it finds its consensus sequence, where it cleaves and resolves the cruciform DNA. This is Holliday junction branch migration complex subunit RuvA from Listeria monocytogenes serotype 4a (strain HCC23).